A 758-amino-acid chain; its full sequence is Vitamin K-dependent gamma-carboxylase (758 aa).

A disordered region spans residues 1–34 (MAVSARPARAPRGPDKVKKDKAAQTSGPRQGSQM). An N-acetylalanine modification is found at A2. Residues 2 to 60 (AVSARPARAPRGPDKVKKDKAAQTSGPRQGSQMGKLLGFEWTDVSSWERLVTLLNRPTD) are Cytoplasmic-facing. The span at 12-22 (RGPDKVKKDKA) shows a compositional bias: basic and acidic residues. Residues 23 to 33 (AQTSGPRQGSQ) are compositionally biased toward polar residues. A helical membrane pass occupies residues 61–81 (PASLAVFRFLFGLMMVLDIPQ). Residues 82–113 (ERGLSSLDRRYLDGLEVCRFPLLDALQPLPLD) lie on the Lumenal side of the membrane. C99 and C450 form a disulfide bridge. The helical transmembrane segment at 114 to 134 (WMYLVYTIMFLGALGMMLGLC) threads the bilayer. At 135–136 (YR) the chain is on the cytoplasmic side. Residues 137–157 (ISCVLFLLPYWYVFLLDKTSW) traverse the membrane as a helical segment. Over 158 to 292 (NNHSYLYGLL…VSYFHCMNSQ (135 aa)) the chain is Lumenal. Residues 293-313 (LFSIGMFPYVMLASSPLFCSP) traverse the membrane as a helical segment. The Cytoplasmic portion of the chain corresponds to 314–361 (EWPRKLVAHCPKKLQELLPLRTAPQPSTSCMYKRSRARGSQKPGLRHQ). The helical transmembrane segment at 362–382 (LSTAFTLLYLLEQLFLPYSHF) threads the bilayer. The Lumenal segment spans residues 383 to 758 (LTQGYNNWTN…PDSHPVHSEF (376 aa)). The interval 726–758 (RPFEPAGEPSPVNTDSSNPNPPEPDSHPVHSEF) is disordered. Basic and acidic residues predominate over residues 749–758 (PDSHPVHSEF).

It belongs to the vitamin K-dependent gamma-carboxylase family. Monomer. May interact with CALU.

Its subcellular location is the endoplasmic reticulum membrane. The catalysed reaction is 4-carboxy-L-glutamyl-[protein] + 2,3-epoxyphylloquinone + H2O + H(+) = phylloquinol + L-glutamyl-[protein] + CO2 + O2. Functionally, mediates the vitamin K-dependent carboxylation of glutamate residues to calcium-binding gamma-carboxyglutamate (Gla) residues with the concomitant conversion of the reduced hydroquinone form of vitamin K to vitamin K epoxide. Catalyzes gamma-carboxylation of various proteins, such as blood coagulation factors (F2, F7, F9 and F10), osteocalcin (BGLAP) or matrix Gla protein (MGP). This Ovis aries (Sheep) protein is Vitamin K-dependent gamma-carboxylase (GGCX).